The following is an 855-amino-acid chain: Protein translocase subunit SecA (855 aa).

Residues Q88, 106-110 (GEGKT), and D509 each bind ATP. Positions 815-837 (EANLQNKFEKKPARNEPCPCGSG) are disordered. Residues C832, C834, C843, and C844 each coordinate Zn(2+).

It belongs to the SecA family. As to quaternary structure, monomer and homodimer. Part of the essential Sec protein translocation apparatus which comprises SecA, SecYEG and auxiliary proteins SecDF-YajC and YidC. Zn(2+) serves as cofactor.

The protein resides in the cell inner membrane. The protein localises to the cytoplasm. The catalysed reaction is ATP + H2O + cellular proteinSide 1 = ADP + phosphate + cellular proteinSide 2.. Part of the Sec protein translocase complex. Interacts with the SecYEG preprotein conducting channel. Has a central role in coupling the hydrolysis of ATP to the transfer of proteins into and across the cell membrane, serving as an ATP-driven molecular motor driving the stepwise translocation of polypeptide chains across the membrane. The polypeptide is Protein translocase subunit SecA (Campylobacter fetus subsp. fetus (strain 82-40)).